A 294-amino-acid chain; its full sequence is UDP-3-O-acyl-N-acetylglucosamine deacetylase (294 aa).

Positions 75, 232, and 236 each coordinate Zn(2+). H259 (proton donor) is an active-site residue.

It belongs to the LpxC family. Zn(2+) is required as a cofactor.

It carries out the reaction a UDP-3-O-[(3R)-3-hydroxyacyl]-N-acetyl-alpha-D-glucosamine + H2O = a UDP-3-O-[(3R)-3-hydroxyacyl]-alpha-D-glucosamine + acetate. It functions in the pathway glycolipid biosynthesis; lipid IV(A) biosynthesis; lipid IV(A) from (3R)-3-hydroxytetradecanoyl-[acyl-carrier-protein] and UDP-N-acetyl-alpha-D-glucosamine: step 2/6. Functionally, catalyzes the hydrolysis of UDP-3-O-myristoyl-N-acetylglucosamine to form UDP-3-O-myristoylglucosamine and acetate, the committed step in lipid A biosynthesis. The sequence is that of UDP-3-O-acyl-N-acetylglucosamine deacetylase from Campylobacter curvus (strain 525.92).